We begin with the raw amino-acid sequence, 214 residues long: Urease accessory protein UreG (214 aa).

Residues Met1 to Gly20 form a disordered region. Position 23 to 30 (Gly23 to Thr30) interacts with GTP.

It belongs to the SIMIBI class G3E GTPase family. UreG subfamily. As to quaternary structure, homodimer. UreD, UreF and UreG form a complex that acts as a GTP-hydrolysis-dependent molecular chaperone, activating the urease apoprotein by helping to assemble the nickel containing metallocenter of UreC. The UreE protein probably delivers the nickel.

The protein localises to the cytoplasm. Facilitates the functional incorporation of the urease nickel metallocenter. This process requires GTP hydrolysis, probably effectuated by UreG. The polypeptide is Urease accessory protein UreG (Leptothrix cholodnii (strain ATCC 51168 / LMG 8142 / SP-6) (Leptothrix discophora (strain SP-6))).